Here is a 137-residue protein sequence, read N- to C-terminus: MLQPKRTKFRKAFKGRIHGAAKGGFELSFGQFGLKALEPERITARQIEAARRAMTRHMKRAGRVWIRIFPDVPVSKKPTEVRMGKGKGAPELWAVRVAPGRIMFELDGVPVDLAREALQLASAKLPIKTRFIQRIQE.

This sequence belongs to the universal ribosomal protein uL16 family. As to quaternary structure, part of the 50S ribosomal subunit.

Its function is as follows. Binds 23S rRNA and is also seen to make contacts with the A and possibly P site tRNAs. The polypeptide is Large ribosomal subunit protein uL16 (Methylocella silvestris (strain DSM 15510 / CIP 108128 / LMG 27833 / NCIMB 13906 / BL2)).